Here is a 939-residue protein sequence, read N- to C-terminus: AP-2 complex subunit alpha (939 aa).

Positions 623-633 (RVPENEIRESK) are enriched in basic and acidic residues. The tract at residues 623–660 (RVPENEIRESKSPAPTSGPGSVLQNNVHVNNSHSKLNN) is disordered. Polar residues predominate over residues 635–660 (PAPTSGPGSVLQNNVHVNNSHSKLNN).

Belongs to the adapter complexes large subunit family. In terms of assembly, adaptor protein complex 2 (AP-2) is a heterotetramer composed of two large adaptins (alpha-type and beta-type subunits), a medium adaptin (mu-type subunit AP50) and a small adaptin (sigma-type subunit AP17).

Its subcellular location is the cell membrane. The protein localises to the membrane. It is found in the coated pit. Its function is as follows. Adaptins are components of the adapter complexes which link clathrin to receptors in coated vesicles. Clathrin-associated protein complexes are believed to interact with the cytoplasmic tails of membrane proteins, leading to their selection and concentration. Alpha adaptin is a subunit of the plasma membrane adapter. The sequence is that of AP-2 complex subunit alpha from Drosophila pseudoobscura pseudoobscura (Fruit fly).